The following is a 219-amino-acid chain: Vacuolar protein sorting-associated protein 32 homolog 2 (219 aa).

Coiled-coil stretches lie at residues lysine 10 to glycine 41 and threonine 117 to glutamine 176. The segment at glutamate 168–leucine 219 is disordered.

Belongs to the SNF7 family. Component of the endosomal sorting required for transport complex III (ESCRT-III), composed at least of VPS2, VPS20, VPS24 and VPS32. Interacts with SKD1. Interacts with BRO1/ALIX.

It is found in the endosome. Component of the ESCRT-III complex, which is required for multivesicular bodies (MVBs) formation and sorting of endosomal cargo proteins into MVBs. The ESCRT-III complex is probably involved in the concentration of MVB cargo. The protein is Vacuolar protein sorting-associated protein 32 homolog 2 (VPS32.2) of Arabidopsis thaliana (Mouse-ear cress).